The sequence spans 221 residues: Transcription factor bHLH148 (221 aa).

2 disordered regions span residues 1 to 45 and 70 to 89; these read MASL…GEIH and LNSSASTSSSPTAQKRGKAV. Low complexity-rich tracts occupy residues 26–41 and 72–82; these read SASSAASSRSSASSVS and SSASTSSSPTA. Residues 148–197 enclose the bHLH domain; that stretch reads KRRVSVLRLNKKSIPDVNRKVRVLGRLVPGCGKQSVPVILEEATDYIQAL.

As to quaternary structure, homodimer. Interacts with PRE3. Binds to RSA1.

The protein localises to the nucleus. Functionally, bHLH transcription factor that binds DNA on specific sequence 5'-CANNTG-3' in target gene promoters. Negatively regulates brassinosteroid signaling. Together with BHLH148/RITF1, regulates the transcription of several genes involved in the detoxification of reactive oxygen species (ROS) generated by salt (NaCl) stress. Confers tolerance to salt and to the oxidative stress-inducing reagents hydrogen peroxide H(2)O(2) and methyl viologen (MV). In Arabidopsis thaliana (Mouse-ear cress), this protein is Transcription factor bHLH148.